The sequence spans 397 residues: Enoyl-[acyl-carrier-protein] reductase [NADH] (397 aa).

Residues 48–53, 74–75, 111–112, and 139–140 contribute to the NAD(+) site; these read GASTGY, FE, DA, and VA. Tyr-225 contacts substrate. Tyr-235 acts as the Proton donor in catalysis. NAD(+)-binding positions include Lys-244 and 273 to 275; that span reads VVT.

This sequence belongs to the TER reductase family. In terms of assembly, monomer.

It catalyses the reaction a 2,3-saturated acyl-[ACP] + NAD(+) = a (2E)-enoyl-[ACP] + NADH + H(+). Its pathway is lipid metabolism; fatty acid biosynthesis. Its function is as follows. Involved in the final reduction of the elongation cycle of fatty acid synthesis (FAS II). Catalyzes the reduction of a carbon-carbon double bond in an enoyl moiety that is covalently linked to an acyl carrier protein (ACP). This chain is Enoyl-[acyl-carrier-protein] reductase [NADH], found in Burkholderia pseudomallei (strain K96243).